Consider the following 472-residue polypeptide: Protein hedgehog (472 aa).

A lipid anchor (N-palmitoyl cysteine) is attached at cysteine 84. Ca(2+)-binding residues include glutamate 149, aspartate 154, glutamate 185, aspartate 188, and aspartate 190. A lipid anchor (Cholesterol glycine ester) is attached at glycine 256.

This sequence belongs to the hedgehog family. In terms of assembly, interacts with shf. The C-terminal part of the hedgehog protein precursor displays an autoproteolysis activity that results in the cleavage of the full-length protein into two parts (N-product and C-product). In addition, the C-terminal part displays a cholesterol transferase activity that results by the covalent attachment of a cholesterol moiety to the C-terminal of the newly generated N-product. The N-product is the active species in both local and long-range signaling, whereas the C-product has no signaling activity. Post-translationally, cholesterylation is required for N-product targeting to lipid rafts and multimerization. In terms of processing, N-palmitoylation by Rasp of the hedgehog N-product, within the secretory pathway, is required for the embryonic and larval patterning activities of the hedgehog signal.

It is found in the nucleus. Its subcellular location is the cytoplasm. The protein localises to the cell membrane. It catalyses the reaction glycyl-L-cysteinyl-[protein] + cholesterol + H(+) = [protein]-C-terminal glycyl cholesterol ester + N-terminal L-cysteinyl-[protein]. In terms of biological role, the C-terminal part of the hedgehog protein precursor displays an autoproteolysis activity that results in the cleavage of the full-length protein into two parts (N-product and C-product). In addition, the C-terminal part displays a cholesterol transferase activity that results by the covalent attachment of a cholesterol moiety to the C-terminal of the newly generated N-product. Once cleaved, the C-product has no signaling activity and diffuses from the cell. The dually lipidated hedgehog protein N-product is a morphogen which is essential for a variety of patterning events during development. Establishes the anterior-posterior axis of the embryonic segments and patterns the larval imaginal disks. Binds to the patched (ptc) receptor, which functions in association with smoothened (smo), to activate the transcription of target genes wingless (wg), decapentaplegic (dpp) and ptc. In the absence of hh, ptc represses the constitutive signaling activity of smo through fused (fu). Essential component of a signaling pathway which regulates the Duox-dependent gut immune response to bacterial uracil; required to activate Cad99C-dependent endosome formation, norpA-dependent Ca2+ mobilization and p38 MAPK, which are essential steps in the Duox-dependent production of reactive oxygen species (ROS) in response to intestinal bacterial infection. During photoreceptor differentiation, it up-regulates transcription of Ubr3, which in turn promotes the hh-signaling pathway by mediating the ubiquitination and degradation of cos. This is Protein hedgehog from Drosophila ananassae (Fruit fly).